We begin with the raw amino-acid sequence, 202 residues long: Glycoprotein U22 (202 aa).

The N-terminal stretch at 1-20 (MVPQGCSLVWVSALYVSVIA) is a signal peptide. N-linked (GlcNAc...) asparagine; by host glycans are attached at residues asparagine 54, asparagine 107, asparagine 112, and asparagine 125. Residues 172–192 (FVYYCISVYLFAVVVLCSCWF) form a helical membrane-spanning segment.

It localises to the membrane. The polypeptide is Glycoprotein U22 (U22) (Homo sapiens (Human)).